The chain runs to 170 residues: Adenine phosphoribosyltransferase (170 aa).

Belongs to the purine/pyrimidine phosphoribosyltransferase family. Homodimer.

It localises to the cytoplasm. It carries out the reaction AMP + diphosphate = 5-phospho-alpha-D-ribose 1-diphosphate + adenine. It participates in purine metabolism; AMP biosynthesis via salvage pathway; AMP from adenine: step 1/1. Its function is as follows. Catalyzes a salvage reaction resulting in the formation of AMP, that is energically less costly than de novo synthesis. The protein is Adenine phosphoribosyltransferase of Brachyspira hyodysenteriae (strain ATCC 49526 / WA1).